The sequence spans 232 residues: Phosphatidylserine decarboxylase proenzyme (232 aa).

The active-site Schiff-base intermediate with substrate; via pyruvic acid is Ser-190. Ser-190 carries the pyruvic acid (Ser); by autocatalysis modification.

Belongs to the phosphatidylserine decarboxylase family. PSD-A subfamily. As to quaternary structure, heterodimer of a large membrane-associated beta subunit and a small pyruvoyl-containing alpha subunit. It depends on pyruvate as a cofactor. Post-translationally, is synthesized initially as an inactive proenzyme. Formation of the active enzyme involves a self-maturation process in which the active site pyruvoyl group is generated from an internal serine residue via an autocatalytic post-translational modification. Two non-identical subunits are generated from the proenzyme in this reaction, and the pyruvate is formed at the N-terminus of the alpha chain, which is derived from the carboxyl end of the proenzyme. The post-translation cleavage follows an unusual pathway, termed non-hydrolytic serinolysis, in which the side chain hydroxyl group of the serine supplies its oxygen atom to form the C-terminus of the beta chain, while the remainder of the serine residue undergoes an oxidative deamination to produce ammonia and the pyruvoyl prosthetic group on the alpha chain.

Its subcellular location is the cell membrane. It catalyses the reaction a 1,2-diacyl-sn-glycero-3-phospho-L-serine + H(+) = a 1,2-diacyl-sn-glycero-3-phosphoethanolamine + CO2. It participates in phospholipid metabolism; phosphatidylethanolamine biosynthesis; phosphatidylethanolamine from CDP-diacylglycerol: step 2/2. Its function is as follows. Catalyzes the formation of phosphatidylethanolamine (PtdEtn) from phosphatidylserine (PtdSer). The polypeptide is Phosphatidylserine decarboxylase proenzyme (Rhizobium etli (strain ATCC 51251 / DSM 11541 / JCM 21823 / NBRC 15573 / CFN 42)).